Reading from the N-terminus, the 307-residue chain is NAD kinase (307 aa).

The Proton acceptor role is filled by aspartate 78. NAD(+) is bound by residues 78 to 79 (DG), histidine 83, 154 to 155 (NE), arginine 165, arginine 182, aspartate 184, and glutamine 255.

It belongs to the NAD kinase family. Requires a divalent metal cation as cofactor.

It localises to the cytoplasm. It catalyses the reaction NAD(+) + ATP = ADP + NADP(+) + H(+). Functionally, involved in the regulation of the intracellular balance of NAD and NADP, and is a key enzyme in the biosynthesis of NADP. Catalyzes specifically the phosphorylation on 2'-hydroxyl of the adenosine moiety of NAD to yield NADP. In Halorhodospira halophila (strain DSM 244 / SL1) (Ectothiorhodospira halophila (strain DSM 244 / SL1)), this protein is NAD kinase.